Reading from the N-terminus, the 559-residue chain is Protein pp71 (559 aa).

Residue cysteine 218 is modified to S-nitrosocysteine; by host. Threonine 223 carries the post-translational modification Phosphothreonine. 2 disordered regions span residues 404 to 440 and 530 to 559; these read EFLP…TPLS and SSTL…RPRI. The segment covering 415-430 has biased composition (acidic residues); it reads TEEEEEEEEEDDEDDL. 2 stretches are compositionally biased toward low complexity: residues 431 to 440 and 543 to 559; these read SSTPTPTPLS and PIST…RPRI.

The protein belongs to the herpesviridae pp71 family. As to quaternary structure, interacts with the host protein DAXX; this interaction takes place at ND10 and induces the reversal of DAXX-mediated repression of viral transcription. Interacts with UL35. Interacts with host TMEM173/STING1; this interaction inhibits the cGAS/STING pathway. Interacts with host RB1; this interaction mediates RB1 proteasomal degradation. In terms of processing, S-nitrosylation limits ability to undermine the cGAS/STING antiviral pathway.

It localises to the virion tegument. It is found in the host nucleus. The protein resides in the host endoplasmic reticulum. Functionally, stimulates viral immediate-early (IE) transcription. Plays a role in the inhibition of the host innate repsonse by targeting STING1 and thus the cGAS-STING pathway. Also counteracts host DAXX-mediated repression of viral transcription. Displaces a DAXX-binding protein, ATRX, from nuclear domain 10 sites (ND10) shortly after infection. Increases the basal level of SUMOylated DAXX in infected cells. Stimulates quiescent cells to re-enter the cell cycle, proceed through G1 and enter the S phase. Interacts with hypophosphorylated forms of RB1 and induces their degradation by the proteasome without involving ubiquitin conjugation. This chain is Protein pp71 (UL82), found in Homo sapiens (Human).